Here is a 366-residue protein sequence, read N- to C-terminus: Histidinol-phosphate aminotransferase (366 aa).

Lys226 is modified (N6-(pyridoxal phosphate)lysine).

Belongs to the class-II pyridoxal-phosphate-dependent aminotransferase family. Histidinol-phosphate aminotransferase subfamily. Pyridoxal 5'-phosphate serves as cofactor.

The enzyme catalyses L-histidinol phosphate + 2-oxoglutarate = 3-(imidazol-4-yl)-2-oxopropyl phosphate + L-glutamate. It functions in the pathway amino-acid biosynthesis; L-histidine biosynthesis; L-histidine from 5-phospho-alpha-D-ribose 1-diphosphate: step 7/9. This chain is Histidinol-phosphate aminotransferase, found in Methanosarcina barkeri (strain Fusaro / DSM 804).